The sequence spans 86 residues: Translation initiation factor IF-1 2 (86 aa).

One can recognise an S1-like domain in the interval 1–72; the sequence is MAKEELLEME…TKARISFRHK (72 aa).

The protein belongs to the IF-1 family. In terms of assembly, component of the 30S ribosomal translation pre-initiation complex which assembles on the 30S ribosome in the order IF-2 and IF-3, IF-1 and N-formylmethionyl-tRNA(fMet); mRNA recruitment can occur at any time during PIC assembly.

The protein localises to the cytoplasm. Its function is as follows. One of the essential components for the initiation of protein synthesis. Stabilizes the binding of IF-2 and IF-3 on the 30S subunit to which N-formylmethionyl-tRNA(fMet) subsequently binds. Helps modulate mRNA selection, yielding the 30S pre-initiation complex (PIC). Upon addition of the 50S ribosomal subunit IF-1, IF-2 and IF-3 are released leaving the mature 70S translation initiation complex. The polypeptide is Translation initiation factor IF-1 2 (Aromatoleum aromaticum (strain DSM 19018 / LMG 30748 / EbN1) (Azoarcus sp. (strain EbN1))).